Reading from the N-terminus, the 358-residue chain is Porphobilinogen deaminase, chloroplastic (358 aa).

Residues 1–24 form the signal peptide; the sequence is MPPPPRCAATTAHHSLLGSPTCLA. Cys-290 carries the post-translational modification S-(dipyrrolylmethanemethyl)cysteine.

The protein belongs to the HMBS family. The cofactor is dipyrromethane.

It is found in the plastid. The protein resides in the chloroplast. The catalysed reaction is 4 porphobilinogen + H2O = hydroxymethylbilane + 4 NH4(+). The protein operates within porphyrin-containing compound metabolism; protoporphyrin-IX biosynthesis; coproporphyrinogen-III from 5-aminolevulinate: step 2/4. It functions in the pathway porphyrin-containing compound metabolism; chlorophyll biosynthesis. In terms of biological role, tetrapolymerization of the monopyrrole PBG into the hydroxymethylbilane pre-uroporphyrinogen in several discrete steps. The protein is Porphobilinogen deaminase, chloroplastic (HEMC) of Oryza sativa subsp. japonica (Rice).